We begin with the raw amino-acid sequence, 180 residues long: Dephospho-CoA kinase (180 aa).

The 179-residue stretch at 2-180 folds into the DPCK domain; it reads VIGVTGKIGT…VMKLVWEKRE (179 aa). 10–15 contacts ATP; it reads GTGKST.

The protein belongs to the CoaE family.

It is found in the cytoplasm. The catalysed reaction is 3'-dephospho-CoA + ATP = ADP + CoA + H(+). Its pathway is cofactor biosynthesis; coenzyme A biosynthesis; CoA from (R)-pantothenate: step 5/5. Functionally, catalyzes the phosphorylation of the 3'-hydroxyl group of dephosphocoenzyme A to form coenzyme A. In Thermotoga maritima (strain ATCC 43589 / DSM 3109 / JCM 10099 / NBRC 100826 / MSB8), this protein is Dephospho-CoA kinase.